We begin with the raw amino-acid sequence, 513 residues long: ATP synthase subunit alpha (513 aa).

169-176 (GDRQTGKT) provides a ligand contact to ATP.

The protein belongs to the ATPase alpha/beta chains family. In terms of assembly, F-type ATPases have 2 components, CF(1) - the catalytic core - and CF(0) - the membrane proton channel. CF(1) has five subunits: alpha(3), beta(3), gamma(1), delta(1), epsilon(1). CF(0) has three main subunits: a(1), b(2) and c(9-12). The alpha and beta chains form an alternating ring which encloses part of the gamma chain. CF(1) is attached to CF(0) by a central stalk formed by the gamma and epsilon chains, while a peripheral stalk is formed by the delta and b chains.

The protein localises to the cell inner membrane. It catalyses the reaction ATP + H2O + 4 H(+)(in) = ADP + phosphate + 5 H(+)(out). In terms of biological role, produces ATP from ADP in the presence of a proton gradient across the membrane. The alpha chain is a regulatory subunit. The chain is ATP synthase subunit alpha from Klebsiella pneumoniae (strain 342).